A 344-amino-acid polypeptide reads, in one-letter code: tRNA N6-adenosine threonylcarbamoyltransferase (344 aa).

2 residues coordinate Fe cation: H110 and H114. Residues 132-136 (LVSGG), D166, G179, D183, and N278 each bind substrate. D306 contributes to the Fe cation binding site.

Belongs to the KAE1 / TsaD family. It depends on Fe(2+) as a cofactor.

The protein resides in the cytoplasm. The enzyme catalyses L-threonylcarbamoyladenylate + adenosine(37) in tRNA = N(6)-L-threonylcarbamoyladenosine(37) in tRNA + AMP + H(+). Functionally, required for the formation of a threonylcarbamoyl group on adenosine at position 37 (t(6)A37) in tRNAs that read codons beginning with adenine. Is involved in the transfer of the threonylcarbamoyl moiety of threonylcarbamoyl-AMP (TC-AMP) to the N6 group of A37, together with TsaE and TsaB. TsaD likely plays a direct catalytic role in this reaction. The chain is tRNA N6-adenosine threonylcarbamoyltransferase from Nocardia farcinica (strain IFM 10152).